The following is a 468-amino-acid chain: Probable multidrug resistance protein NorM (468 aa).

Helical transmembrane passes span 57 to 79 (LAAG…GVLT), 100 to 122 (IYWT…LSFA), 142 to 164 (YAAV…RSFL), 173 to 195 (LLWV…IHGA), 205 to 227 (GSAT…LLHG), 248 to 270 (LFGI…LATG), 280 to 302 (SLAA…LAIG), 323 to 345 (HAGF…VLIV), 360 to 382 (PANA…FQIV), 401 to 423 (VPML…WFAF), and 433 to 452 (WWGL…WRFH).

This sequence belongs to the multi antimicrobial extrusion (MATE) (TC 2.A.66.1) family.

The protein localises to the cell inner membrane. Its function is as follows. Multidrug efflux pump. The sequence is that of Probable multidrug resistance protein NorM (norM) from Burkholderia mallei (strain ATCC 23344).